A 339-amino-acid chain; its full sequence is Cyclin-Y-like protein 1 (339 aa).

The Cyclin N-terminal domain maps to 181–263; it reads QLTAECAIVT…FLELLQFNIN (83 aa).

It belongs to the cyclin family. Cyclin Y subfamily.

It localises to the cell membrane. Functionally, key regulator of Wnt signaling implicated in various biological processes such as embryonic neurogenesis. The polypeptide is Cyclin-Y-like protein 1 (ccnyl1) (Danio rerio (Zebrafish)).